The chain runs to 568 residues: Cytochrome P450 monooxygenase 41 (568 aa).

A helical transmembrane segment spans residues 21 to 41 (LTSLVPLILSVMVCLIATVTI). N-linked (GlcNAc...) asparagine glycans are attached at residues Asn-321 and Asn-377. Heme is bound at residue Cys-514.

This sequence belongs to the cytochrome P450 family. Heme is required as a cofactor.

The protein resides in the membrane. Its pathway is secondary metabolite biosynthesis. Its function is as follows. Cytochrome P450 monooxygenase that is able to use 3,5-dimethoxy-trans-stilbene and 3,5,4'-trimethoxy-trans-stilbene as substrates for oxidation. This is Cytochrome P450 monooxygenase 41 from Postia placenta (strain ATCC 44394 / Madison 698-R) (Brown rot fungus).